A 586-amino-acid polypeptide reads, in one-letter code: Glutamate--tRNA ligase (586 aa).

The 'HIGH' region signature appears at 114-124 (PNPNGPWHVGH). Basic and acidic residues-rich tracts occupy residues 431–443 (ARGE…HEAV) and 459–468 (HPEHPDRGDR). A disordered region spans residues 431-468 (ARGEGPEESHEAVEVPVDDGPDEATPQVHPEHPDRGDR).

This sequence belongs to the class-I aminoacyl-tRNA synthetase family. Glutamate--tRNA ligase type 2 subfamily.

The protein resides in the cytoplasm. The catalysed reaction is tRNA(Glu) + L-glutamate + ATP = L-glutamyl-tRNA(Glu) + AMP + diphosphate. Catalyzes the attachment of glutamate to tRNA(Glu) in a two-step reaction: glutamate is first activated by ATP to form Glu-AMP and then transferred to the acceptor end of tRNA(Glu). The sequence is that of Glutamate--tRNA ligase from Halobacterium salinarum (strain ATCC 29341 / DSM 671 / R1).